We begin with the raw amino-acid sequence, 229 residues long: ATP-dependent dethiobiotin synthetase BioD (229 aa).

12-17 (GVGKTV) serves as a coordination point for ATP. T16 is a binding site for Mg(2+). K37 is an active-site residue. Residue T41 participates in substrate binding. Residues D53, 112–115 (EGAG), and 201–203 (PAG) each bind ATP. Residues D53 and E112 each coordinate Mg(2+).

Belongs to the dethiobiotin synthetase family. In terms of assembly, homodimer. It depends on Mg(2+) as a cofactor.

It localises to the cytoplasm. It carries out the reaction (7R,8S)-7,8-diammoniononanoate + CO2 + ATP = (4R,5S)-dethiobiotin + ADP + phosphate + 3 H(+). It participates in cofactor biosynthesis; biotin biosynthesis; biotin from 7,8-diaminononanoate: step 1/2. Catalyzes a mechanistically unusual reaction, the ATP-dependent insertion of CO2 between the N7 and N8 nitrogen atoms of 7,8-diaminopelargonic acid (DAPA, also called 7,8-diammoniononanoate) to form a ureido ring. This is ATP-dependent dethiobiotin synthetase BioD from Mycobacterium sp. (strain KMS).